A 90-amino-acid polypeptide reads, in one-letter code: U7-theraphotoxin-Hhn1a 8 (90 aa).

A signal peptide spans 1 to 19 (MKTAIFTVVLALAVFAVLS). Residues 20–50 (FGWEANEKALSEEFTELIHEKGAASETEARE) constitute a propeptide that is removed on maturation. 3 disulfides stabilise this stretch: Cys-51-Cys-65, Cys-58-Cys-70, and Cys-64-Cys-81.

The protein belongs to the neurotoxin 10 (Hwtx-1) family. 13 (Hntx-13) subfamily. Expressed by the venom gland.

The protein resides in the secreted. Ion channel inhibitor. The chain is U7-theraphotoxin-Hhn1a 8 from Cyriopagopus hainanus (Chinese bird spider).